The following is a 305-amino-acid chain: Coiled-coil domain-containing protein 83 (305 aa).

The tract at residues 1–25 (MDSSAKGSKKDAPDGPPKDSKLPVS) is disordered. The span at 8–21 (SKKDAPDGPPKDSK) shows a compositional bias: basic and acidic residues. Positions 37 to 186 (ENAVERFMFH…LEDEKKRISR (150 aa)) form a coiled coil.

The sequence is that of Coiled-coil domain-containing protein 83 (Ccdc83) from Mus musculus (Mouse).